Here is a 1551-residue protein sequence, read N- to C-terminus: Serine/threonine-protein kinase MRCK gamma (1551 aa).

Positions Phe71–Phe337 constitute a Protein kinase domain. ATP-binding positions include Ile77–Val85 and Lys100. The active-site Proton acceptor is the Asp195. Phosphoserine; by autocatalysis is present on residues Ser216 and Ser228. Thr234 is subject to Phosphothreonine; by autocatalysis. Residues Glu338–Ser408 enclose the AGC-kinase C-terminal domain. Coiled coils occupy residues Gln442–Asn675 and Lys729–Gly801. Residues Gln578–Ala605 are disordered. Residues Thr820 to Pro886 are disordered. The span at Ala839 to Arg849 shows a compositional bias: basic and acidic residues. The Phorbol-ester/DAG-type zinc finger occupies Ser877–Cys926. The region spanning Gly946–Arg1065 is the PH domain. One can recognise a CNH domain in the interval Leu1091–Phe1365. Residues Ile1436–Gly1449 form the CRIB domain. The disordered stretch occupies residues Asn1441 to Pro1551. A compositionally biased stretch (basic and acidic residues) spans Pro1455 to Ser1468. The residue at position 1481 (Ser1481) is a Phosphoserine. Positions Thr1511–Pro1527 are enriched in polar residues.

This sequence belongs to the protein kinase superfamily. AGC Ser/Thr protein kinase family. DMPK subfamily. Homodimer and homotetramer via the coiled coil regions. Interacts tightly with GTP-bound but not GDP-bound CDC42. The cofactor is Mg(2+).

It is found in the cytoplasm. The catalysed reaction is L-seryl-[protein] + ATP = O-phospho-L-seryl-[protein] + ADP + H(+). It catalyses the reaction L-threonyl-[protein] + ATP = O-phospho-L-threonyl-[protein] + ADP + H(+). Maintained in an inactive, closed conformation by an interaction between the kinase domain and the negative autoregulatory C-terminal coiled-coil region. Agonist binding to the phorbol ester binding site disrupts this, releasing the kinase domain to allow N-terminus-mediated dimerization and kinase activation by transautophosphorylation. May act as a downstream effector of CDC42 in cytoskeletal reorganization. Contributes to the actomyosin contractility required for cell invasion, through the regulation of MYPT1 and thus MLC2 phosphorylation. The protein is Serine/threonine-protein kinase MRCK gamma of Mus musculus (Mouse).